Here is a 115-residue protein sequence, read N- to C-terminus: V-type proton ATPase subunit G (115 aa).

This sequence belongs to the V-ATPase G subunit family. In terms of assembly, V-ATPase is a heteromultimeric enzyme composed of a peripheral catalytic V1 complex (components A to H) attached to an integral membrane V0 proton pore complex (components: a, c, c', c'', d, e, f and VOA1).

The protein localises to the vacuole membrane. In terms of biological role, subunit of the V1 complex of vacuolar(H+)-ATPase (V-ATPase), a multisubunit enzyme composed of a peripheral complex (V1) that hydrolyzes ATP and a membrane integral complex (V0) that translocates protons. V-ATPase is responsible for acidifying and maintaining the pH of intracellular compartments. The chain is V-type proton ATPase subunit G (vma-10) from Neurospora crassa (strain ATCC 24698 / 74-OR23-1A / CBS 708.71 / DSM 1257 / FGSC 987).